The chain runs to 32 residues: Chlorophyll a-b binding protein 2, chloroplastic (32 aa).

Chlorophyll a contacts are provided by glutamate 19 and histidine 22. Arginine 24 is a binding site for chlorophyll b.

Belongs to the light-harvesting chlorophyll a/b-binding (LHC) protein family. As to quaternary structure, the LHC complex consists of chlorophyll a-b binding proteins. Requires Binds at least 14 chlorophylls (8 Chl-a and 6 Chl-b) and carotenoids such as lutein and neoxanthin. as cofactor. In terms of processing, photoregulated by reversible phosphorylation of its threonine residues.

It is found in the plastid. It localises to the chloroplast thylakoid membrane. The light-harvesting complex (LHC) functions as a light receptor, it captures and delivers excitation energy to photosystems with which it is closely associated. The polypeptide is Chlorophyll a-b binding protein 2, chloroplastic (Populus euphratica (Euphrates poplar)).